The primary structure comprises 418 residues: AP-3 complex subunit mu-2 (418 aa).

Positions 176–417 (NNEAYFDVVE…MTKAGKFQVR (242 aa)) constitute an MHD domain.

The protein belongs to the adaptor complexes medium subunit family. Adaptor protein complex 3 (AP-3) is a heterotetramer composed of two large adaptins (delta-type subunit AP3D1 and beta-type subunit AP3B1 or AP3B2), a medium adaptin (mu-type subunit AP3M1 or AP3M2) and a small adaptin (sigma-type subunit APS1 or AP3S2). AP-3 associates with the BLOC-1 complex.

Its subcellular location is the golgi apparatus. The protein localises to the cytoplasmic vesicle membrane. In terms of biological role, component of the adaptor complexes which link clathrin to receptors in coated vesicles. Clathrin-associated protein complexes are believed to interact with the cytoplasmic tails of membrane proteins, leading to their selection and concentration. Ap47 is a subunit of the plasma membrane adaptor. In concert with the BLOC-1 complex, AP-3 is required to target cargos into vesicles assembled at cell bodies for delivery into neurites and nerve terminals. In Rattus norvegicus (Rat), this protein is AP-3 complex subunit mu-2 (Ap3m2).